A 197-amino-acid polypeptide reads, in one-letter code: Imidazoleglycerol-phosphate dehydratase (197 aa).

It belongs to the imidazoleglycerol-phosphate dehydratase family.

The protein localises to the cytoplasm. It catalyses the reaction D-erythro-1-(imidazol-4-yl)glycerol 3-phosphate = 3-(imidazol-4-yl)-2-oxopropyl phosphate + H2O. The protein operates within amino-acid biosynthesis; L-histidine biosynthesis; L-histidine from 5-phospho-alpha-D-ribose 1-diphosphate: step 6/9. This chain is Imidazoleglycerol-phosphate dehydratase, found in Azotobacter vinelandii (strain DJ / ATCC BAA-1303).